The following is a 382-amino-acid chain: Galactokinase (382 aa).

A substrate-binding site is contributed by 34-37 (EHTD). Residue 124–130 (GAGLSSS) coordinates ATP. Mg(2+) is bound by residues Ser-130 and Glu-162. Catalysis depends on Asp-174, which acts as the Proton acceptor. Tyr-223 is a binding site for substrate.

It belongs to the GHMP kinase family. GalK subfamily.

It localises to the cytoplasm. The catalysed reaction is alpha-D-galactose + ATP = alpha-D-galactose 1-phosphate + ADP + H(+). The protein operates within carbohydrate metabolism; galactose metabolism. Its function is as follows. Catalyzes the transfer of the gamma-phosphate of ATP to D-galactose to form alpha-D-galactose-1-phosphate (Gal-1-P). This Salmonella paratyphi B (strain ATCC BAA-1250 / SPB7) protein is Galactokinase.